The chain runs to 419 residues: UDP-N-acetylglucosamine 1-carboxyvinyltransferase (419 aa).

22–23 contributes to the phosphoenolpyruvate binding site; the sequence is KN. R91 provides a ligand contact to UDP-N-acetyl-alpha-D-glucosamine. Catalysis depends on C115, which acts as the Proton donor. C115 bears the 2-(S-cysteinyl)pyruvic acid O-phosphothioketal mark. UDP-N-acetyl-alpha-D-glucosamine is bound by residues 120 to 124, 160 to 163, D305, and I327; these read RPVDL and KVSV.

This sequence belongs to the EPSP synthase family. MurA subfamily.

Its subcellular location is the cytoplasm. It catalyses the reaction phosphoenolpyruvate + UDP-N-acetyl-alpha-D-glucosamine = UDP-N-acetyl-3-O-(1-carboxyvinyl)-alpha-D-glucosamine + phosphate. The protein operates within cell wall biogenesis; peptidoglycan biosynthesis. Its function is as follows. Cell wall formation. Adds enolpyruvyl to UDP-N-acetylglucosamine. In Citrobacter koseri (strain ATCC BAA-895 / CDC 4225-83 / SGSC4696), this protein is UDP-N-acetylglucosamine 1-carboxyvinyltransferase.